The primary structure comprises 253 residues: tRNA-cytidine(32) 2-sulfurtransferase 2 (253 aa).

The PP-loop motif signature appears at 33–38 (SGGKDS). 3 residues coordinate [4Fe-4S] cluster: Cys108, Cys111, and Cys199.

This sequence belongs to the TtcA family. As to quaternary structure, homodimer. Mg(2+) is required as a cofactor. [4Fe-4S] cluster serves as cofactor.

Its subcellular location is the cytoplasm. The catalysed reaction is cytidine(32) in tRNA + S-sulfanyl-L-cysteinyl-[cysteine desulfurase] + AH2 + ATP = 2-thiocytidine(32) in tRNA + L-cysteinyl-[cysteine desulfurase] + A + AMP + diphosphate + H(+). Its pathway is tRNA modification. Catalyzes the ATP-dependent 2-thiolation of cytidine in position 32 of tRNA, to form 2-thiocytidine (s(2)C32). The sulfur atoms are provided by the cysteine/cysteine desulfurase (IscS) system. In Francisella tularensis subsp. novicida (strain U112), this protein is tRNA-cytidine(32) 2-sulfurtransferase 2.